The following is a 454-amino-acid chain: Peroxisome assembly protein 10 (454 aa).

Residues 1 to 23 (MATQPPPARPPPPLTSSPYPYAA) lie on the Peroxisomal matrix side of the membrane. A helical transmembrane segment spans residues 24 to 53 (APDIIRAHQKDAYFQGVLANRLSDLHRRLR). Residue Gly-54 is a topological domain, cytoplasmic. Residues 55 to 76 (ARSAHAWAAETRTFAAALYLCL) form a helical membrane-spanning segment. Over 77–132 (TTLLGNRTLGEEYCDLVQVEEAPSKLFASSSSKAADDHIYENGLGGGGDGGPLLPS) the chain is Peroxisomal matrix. A helical transmembrane segment spans residues 133–165 (LPRRAGYILTAIVLPHLASRALPSVRSAIRKRL). The Cytoplasmic portion of the chain corresponds to 166–201 (QSRLATLSRRRQQTGTKSGSGRGGRGGGGGITEYRV). Positions 171–194 (TLSRRRQQTGTKSGSGRGGRGGGG) are disordered. Residues 183 to 194 (SGSGRGGRGGGG) show a composition bias toward gly residues. The chain crosses the membrane as a helical span at residues 202–229 (LRYLLTHLTPLTSGAHFRAATLAVFYFT). At 230–276 (GAYYELSKWVWGLRYVFTTRAGRVVDDDHNRHHHSPQHGGGNGGRAG) the chain is on the peroxisomal matrix side. Residues 277 to 296 (YEVLGVLLVVQMAVRAWLHV) form a helical membrane-spanning segment. Residues 297–454 (REQLSSGSVA…VQHILPLRAA (158 aa)) lie on the Cytoplasmic side of the membrane. The interval 302–329 (SGSVAGGGGEEEEDGEDGFRERTAFGPG) is disordered. Cys-402, Cys-405, Cys-417, His-419, Cys-422, Cys-425, Cys-436, and Cys-439 together coordinate Zn(2+). The RING-type zinc finger occupies 402-440 (CTLCLEELKDPAATQCGHVFCWACIGDWVREKPECPLCR).

Belongs to the pex2/pex10/pex12 family. Component of the PEX2-PEX10-PEX12 retrotranslocation channel, composed of PEX2, PEX10 and PEX12.

It is found in the peroxisome membrane. It carries out the reaction S-ubiquitinyl-[E2 ubiquitin-conjugating enzyme]-L-cysteine + [acceptor protein]-L-lysine = [E2 ubiquitin-conjugating enzyme]-L-cysteine + N(6)-ubiquitinyl-[acceptor protein]-L-lysine.. The protein operates within protein modification; protein ubiquitination. Its activity is regulated as follows. The E3 ubiquitin-protein ligase activity is stimulated by PEX12. E3 ubiquitin-protein ligase component of a retrotranslocation channel required for peroxisome organization by mediating export of the PEX5 receptor from peroxisomes to the cytosol, thereby promoting PEX5 recycling. The retrotranslocation channel is composed of PEX2, PEX10 and PEX12; each subunit contributing transmembrane segments that coassemble into an open channel that specifically allows the passage of PEX5 through the peroxisomal membrane. PEX10 also regulates PEX5 recycling by acting as a E3 ubiquitin-protein ligase. When PEX5 recycling is compromised, PEX10 catalyzes polyubiquitination of PEX5 during its passage through the retrotranslocation channel, leading to its degradation. The protein is Peroxisome assembly protein 10 of Thermothelomyces thermophilus (strain ATCC 42464 / BCRC 31852 / DSM 1799) (Sporotrichum thermophile).